Reading from the N-terminus, the 282-residue chain is Protease HtpX homolog (282 aa).

The next 2 helical transmembrane spans lie at T6–G26 and G29–H49. H130 contacts Zn(2+). E131 is an active-site residue. Zn(2+) is bound at residue H134. A run of 2 helical transmembrane segments spans residues I140 to A160 and I180 to I200. E205 contacts Zn(2+).

This sequence belongs to the peptidase M48B family. Zn(2+) serves as cofactor.

It is found in the cell inner membrane. In Thermodesulfovibrio yellowstonii (strain ATCC 51303 / DSM 11347 / YP87), this protein is Protease HtpX homolog.